The chain runs to 282 residues: Ribosomal RNA small subunit methyltransferase A (282 aa).

Residues asparagine 28, leucine 30, glycine 55, glutamate 77, aspartate 103, and asparagine 122 each coordinate S-adenosyl-L-methionine.

Belongs to the class I-like SAM-binding methyltransferase superfamily. rRNA adenine N(6)-methyltransferase family. RsmA subfamily.

The protein localises to the cytoplasm. It carries out the reaction adenosine(1518)/adenosine(1519) in 16S rRNA + 4 S-adenosyl-L-methionine = N(6)-dimethyladenosine(1518)/N(6)-dimethyladenosine(1519) in 16S rRNA + 4 S-adenosyl-L-homocysteine + 4 H(+). Specifically dimethylates two adjacent adenosines (A1518 and A1519) in the loop of a conserved hairpin near the 3'-end of 16S rRNA in the 30S particle. May play a critical role in biogenesis of 30S subunits. This Paracoccus denitrificans (strain Pd 1222) protein is Ribosomal RNA small subunit methyltransferase A.